We begin with the raw amino-acid sequence, 293 residues long: Glycerophosphodiester phosphodiesterase (293 aa).

An N-terminal signal peptide occupies residues 1-26 (MRKNRILALFVLSLGLLSFMVTPVSA). The GP-PDE domain maps to 38–290 (ILTVAHRGAS…NYPDLFHKVK (253 aa)). The active-site Proton acceptor is the H43. Sn-glycerol 3-phosphate contacts are provided by H43, R44, and E70. Positions 70 and 72 each coordinate Ca(2+). 3 residues coordinate sn-glycerol 3-phosphate: H85, E152, and Q188. H85 serves as the catalytic Proton donor. Residue E152 participates in Ca(2+) binding.

The protein belongs to the glycerophosphoryl diester phosphodiesterase family. It depends on Ca(2+) as a cofactor.

Its subcellular location is the secreted. It carries out the reaction a sn-glycero-3-phosphodiester + H2O = an alcohol + sn-glycerol 3-phosphate + H(+). Its function is as follows. Glycerophosphodiester phosphodiesterase hydrolyzes glycerophosphodiesters into glycerol-3-phosphate (G3P) and the corresponding alcohol. Involved in wall teichoic acid (WTA) metabolism during phosphate starvation. Catalyzes the degradation of WTA, enabling the utilization of WTA as a phosphate reserve under limiting conditions. Is highly selective for the poly(gylcerol phosphate) WTA backbone and catalyzes exolytic cleavage of individual monomer units. In vitro is active toward the WTA oligomer mimics glycerophosphoglycerol (GPG) and bis-glycerophosphoglycerol (bGPG). This Bacillus subtilis (strain 168) protein is Glycerophosphodiester phosphodiesterase.